The chain runs to 1112 residues: DNA polymerase II large subunit (1112 aa).

This sequence belongs to the archaeal DNA polymerase II family. In terms of assembly, heterodimer of a large subunit and a small subunit.

It carries out the reaction DNA(n) + a 2'-deoxyribonucleoside 5'-triphosphate = DNA(n+1) + diphosphate. It catalyses the reaction Exonucleolytic cleavage in the 3'- to 5'-direction to yield nucleoside 5'-phosphates.. Its function is as follows. Possesses two activities: a DNA synthesis (polymerase) and an exonucleolytic activity that degrades single-stranded DNA in the 3'- to 5'-direction. Has a template-primer preference which is characteristic of a replicative DNA polymerase. The chain is DNA polymerase II large subunit from Cenarchaeum symbiosum (strain A).